The following is a 126-amino-acid chain: Bleomycin resistance protein (126 aa).

A VOC domain is found at 1 to 119; it reads MTDQATPNLP…DGTLLRLIQN (119 aa).

The protein belongs to the bleomycin resistance protein family.

In terms of biological role, binding protein with a strong affinity to the bleomycin family of antibiotics. Binds to CL990; an antimitotic-antibiotic compound. This Klebsiella pneumoniae protein is Bleomycin resistance protein (ble).